A 971-amino-acid polypeptide reads, in one-letter code: Putative helicase 184R (971 aa).

Residues 506–528 (GYEPSDSGFGFDDDDSASTSGGK) form a disordered region. The SF3 helicase domain maps to 624-807 (PKVIKMLNFF…FKDSIDDISL (184 aa)). 668 to 675 (GEGDNGKS) provides a ligand contact to ATP.

It belongs to the IIV-6 184R family.

The polypeptide is Putative helicase 184R (Acheta domesticus (House cricket)).